Reading from the N-terminus, the 482-residue chain is Glutamate--tRNA ligase (482 aa).

Positions 9-19 match the 'HIGH' region motif; the sequence is PSPTGYLHIGG. The 'KMSKS' region motif lies at 252 to 256; that stretch reads KLSKR. Lys255 contacts ATP.

Belongs to the class-I aminoacyl-tRNA synthetase family. Glutamate--tRNA ligase type 1 subfamily. As to quaternary structure, monomer.

The protein resides in the cytoplasm. It catalyses the reaction tRNA(Glu) + L-glutamate + ATP = L-glutamyl-tRNA(Glu) + AMP + diphosphate. Functionally, catalyzes the attachment of glutamate to tRNA(Glu) in a two-step reaction: glutamate is first activated by ATP to form Glu-AMP and then transferred to the acceptor end of tRNA(Glu). This chain is Glutamate--tRNA ligase, found in Ureaplasma parvum serovar 3 (strain ATCC 27815 / 27 / NCTC 11736).